Consider the following 601-residue polypeptide: Glutathione-regulated potassium-efflux system protein KefB (601 aa).

The next 13 membrane-spanning stretches (helical) occupy residues 4–24, 29–49, 55–75, 87–107, 115–135, 152–172, 177–197, 207–227, 230–250, 262–282, 284–304, 324–344, and 356–376; these read SDFL…VPLA, IGAV…GLGF, EILH…GLEL, IFGV…GLLM, AAVV…LQLM, VLLF…LLAG, HFDW…LIGG, FIAA…LVLG, LFMD…GVLL, AIDP…GMSL, LGVL…LVAV, MQFA…FSTA, and ALLL…MKLV. One can recognise an RCK N-terminal domain in the interval 400–519; it reads KPQVIVVGFG…AGVTQFSRET (120 aa).

It belongs to the monovalent cation:proton antiporter 2 (CPA2) transporter (TC 2.A.37) family. KefB subfamily. Interacts with the regulatory subunit KefG.

It localises to the cell inner membrane. In terms of biological role, pore-forming subunit of a potassium efflux system that confers protection against electrophiles. Catalyzes K(+)/H(+) antiport. This Shigella boydii serotype 18 (strain CDC 3083-94 / BS512) protein is Glutathione-regulated potassium-efflux system protein KefB.